We begin with the raw amino-acid sequence, 886 residues long: Vam6/Vps39-like protein (886 aa).

Residues 15–294 (PLQIDCLAAW…RFITSGGSNI (280 aa)) enclose the CNH domain. Residues 573–750 (FTEDLPEVES…LLRMYLSPPS (178 aa)) form a CHCR repeat.

This sequence belongs to the VAM6/VPS39 family. As to quaternary structure, homooligomer. Interacts with TGFBR2 and, less efficiently, with TGFBR1; interaction with TGFBR2 is independent of the receptor kinase activity and of the presence of TGF-beta. Also interacts with ACVR2B, but not with BMPR2. Interacts with SMAD4, preferentially following TGF-beta treatment. Component of the putative homotypic fusion and vacuole protein sorting (HOPS) complex; the core of which composed of the class C Vps proteins VPS11, VPS16, VPS18 and VPS33A, is associated with VPS39 and VPS41. Interacts with PLEKHM2; involved in VPS39 recruitment to ARL8B-containing lysosomes. Associates with adapter protein complex 3 (AP-3) and clathrin:AP-3 complexes. Interacts with STX17; this interaction is increased in the absence of TMEM39A. Interacts with RAB7, RAB2A and RAB2B. Interacts with RAB2A (GTP-bound); the interaction contributes to obtaining a functional HOPS complex that promotes autophagosome-lysosome membrane fusion driven by STX17-SNAP29-VAMP8. Interacts with RAB39A (GTP-bound) and RAB39B (GTP-bound); interaction with RAB39A contributes to obtaining a functional HOPS complex.

The protein localises to the cytoplasm. It localises to the lysosome membrane. It is found in the late endosome membrane. Regulator of TGF-beta/activin signaling, inhibiting SMAD3- and activating SMAD2-dependent transcription. Acts by interfering with SMAD3/SMAD4 complex formation, this would lead to inhibition of SMAD3-dependent transcription and relieve SMAD3 inhibition of SMAD2-dependent promoters, thus increasing SMAD2-dependent transcription. Functionally, plays a role in vesicle-mediated protein trafficking to lysosomal compartments including the endocytic membrane transport and autophagic pathways. Acts as a component of the HOPS endosomal tethering complex which is proposed to be involved in the Rab5-to-Rab7 endosome conversion probably implicating MON1A/B, and via binding SNAREs and SNARE complexes to mediate tethering and docking events during SNARE-mediated membrane fusion. The HOPS complex is proposed to be recruited to Rab7 on the late endosomal membrane and to regulate late endocytic, phagocytic and autophagic traffic towards lysosomes. Involved in homotypic vesicle fusions between late endosomes and in heterotypic fusions between late endosomes and lysosomes. Required for fusion of endosomes and autophagosomes with lysosomes. In Mus musculus (Mouse), this protein is Vam6/Vps39-like protein.